The following is a 62-amino-acid chain: Prokaryotic ubiquitin-like protein Pup (62 aa).

The disordered stretch occupies residues 1-29 (MSQQSLNAPGPGAEDGNDPEAVTGGQTFA). The interval 21–56 (AVTGGQTFASAQAADDLLDEIDSVLESNAETFVRSF) is ARC ATPase binding. Q62 bears the Deamidated glutamine mark. Q62 is covalently cross-linked (Isoglutamyl lysine isopeptide (Gln-Lys) (interchain with K-? in acceptor proteins)).

It belongs to the prokaryotic ubiquitin-like protein family. In terms of assembly, strongly interacts with the proteasome-associated ATPase ARC through a hydrophobic interface; the interacting region of Pup lies in its C-terminal half. There is one Pup binding site per ARC hexamer ring. Post-translationally, is modified by deamidation of its C-terminal glutamine to glutamate by the deamidase Dop, a prerequisite to the subsequent pupylation process.

It functions in the pathway protein degradation; proteasomal Pup-dependent pathway. In terms of biological role, protein modifier that is covalently attached to lysine residues of substrate proteins, thereby targeting them for proteasomal degradation. The tagging system is termed pupylation. In Brachybacterium faecium (strain ATCC 43885 / DSM 4810 / JCM 11609 / LMG 19847 / NBRC 14762 / NCIMB 9860 / 6-10), this protein is Prokaryotic ubiquitin-like protein Pup.